Here is a 387-residue protein sequence, read N- to C-terminus: Pepsin A (387 aa).

The first 15 residues, 1 to 15, serve as a signal peptide directing secretion; that stretch reads MKWLLLLSLVALSEC. The propeptide at 16 to 61 is activation peptide; that stretch reads LYKVSLIKKKSLRKNLIEHGLLKDFLKNNTLDPASKYFPQGEAATM. The Peptidase A1 domain maps to 75 to 384; the sequence is YFGTIGIGTP…DRANNQVGLA (310 aa). Asp93 is an active-site residue. Cysteines 106 and 111 form a disulfide. A Phosphoserine modification is found at Ser129. Cys267 and Cys271 are oxidised to a cystine. The active site involves Asp276. The cysteines at positions 310 and 343 are disulfide-linked.

Belongs to the peptidase A1 family.

The protein localises to the secreted. It catalyses the reaction Preferential cleavage: hydrophobic, preferably aromatic, residues in P1 and P1' positions. Cleaves 1-Phe-|-Val-2, 4-Gln-|-His-5, 13-Glu-|-Ala-14, 14-Ala-|-Leu-15, 15-Leu-|-Tyr-16, 16-Tyr-|-Leu-17, 23-Gly-|-Phe-24, 24-Phe-|-Phe-25 and 25-Phe-|-Tyr-26 bonds in the B chain of insulin.. With respect to regulation, inhibited by pepstatin. Shows particularly broad specificity; although bonds involving phenylalanine and leucine are preferred, many others are also cleaved to some extent. The chain is Pepsin A (PGA) from Callithrix jacchus (White-tufted-ear marmoset).